Consider the following 443-residue polypeptide: CBL-interacting protein kinase 2 (443 aa).

The Protein kinase domain maps to 13–267 (YEMGKLLGQG…MDKIMENPWF (255 aa)). Residues 19–27 (LGQGTFAKV) and Lys-42 each bind ATP. Residue Asp-135 is the Proton acceptor of the active site. Residues 153-182 (DFGLSALADCKRQDGLLHTTCGTPAYVAPE) form an activation loop region. The 28-residue stretch at 302-329 (TLEKKPSNLNAFDIISLSTGLDLSGMFE) folds into the NAF domain. The PPI stretch occupies residues 333–362 (KKESKFTSTSTASTIISKIEDIAKGLRLKL).

It belongs to the protein kinase superfamily. CAMK Ser/Thr protein kinase family. SNF1 subfamily. Requires Mn(2+) as cofactor.

The enzyme catalyses L-seryl-[protein] + ATP = O-phospho-L-seryl-[protein] + ADP + H(+). It catalyses the reaction L-threonyl-[protein] + ATP = O-phospho-L-threonyl-[protein] + ADP + H(+). Functionally, CIPK serine-threonine protein kinases interact with CBL proteins. Binding of a CBL protein to the regulatory NAF domain of CIPK protein lead to the activation of the kinase in a calcium-dependent manner. The protein is CBL-interacting protein kinase 2 (CIPK2) of Oryza sativa subsp. japonica (Rice).